Here is a 597-residue protein sequence, read N- to C-terminus: Elongation factor 4 (597 aa).

Residues 2 to 184 (KNIRNFSIIA…EIVAKIPAPT (183 aa)) form the tr-type G domain. GTP contacts are provided by residues 14-19 (DHGKST) and 131-134 (NKID).

Belongs to the TRAFAC class translation factor GTPase superfamily. Classic translation factor GTPase family. LepA subfamily.

It localises to the cell inner membrane. The catalysed reaction is GTP + H2O = GDP + phosphate + H(+). Its function is as follows. Required for accurate and efficient protein synthesis under certain stress conditions. May act as a fidelity factor of the translation reaction, by catalyzing a one-codon backward translocation of tRNAs on improperly translocated ribosomes. Back-translocation proceeds from a post-translocation (POST) complex to a pre-translocation (PRE) complex, thus giving elongation factor G a second chance to translocate the tRNAs correctly. Binds to ribosomes in a GTP-dependent manner. This Neisseria meningitidis serogroup C (strain 053442) protein is Elongation factor 4.